A 185-amino-acid chain; its full sequence is Ribosome-recycling factor (185 aa).

Residues 132 to 152 (RRDANEQLKKMEKDSELTEDD) are disordered.

It belongs to the RRF family.

It is found in the cytoplasm. Functionally, responsible for the release of ribosomes from messenger RNA at the termination of protein biosynthesis. May increase the efficiency of translation by recycling ribosomes from one round of translation to another. The chain is Ribosome-recycling factor from Alkaliphilus metalliredigens (strain QYMF).